Consider the following 71-residue polypeptide: Conotoxin Bu24 (71 aa).

A signal peptide spans 1–21 (MGMRMMVTVFLLVVLATTVVS). Residues 22 to 44 (LRSNRASDGRRGIVNKLNDLVPK) constitute a propeptide that is removed on maturation. Residue N70 is modified to Asparagine amide.

Belongs to the conotoxin A superfamily. In terms of processing, contains 3 disulfide bonds. They are not indicated here, since framework IV presents two different connectivities (I-V, II-III, IV-VI and I-III, II-V, IV-VI). As to expression, expressed by the venom duct.

It is found in the secreted. This is Conotoxin Bu24 from Conus bullatus (Bubble cone).